Consider the following 390-residue polypeptide: Alanine racemase (390 aa).

The active-site Proton acceptor; specific for D-alanine is K37. K37 is subject to N6-(pyridoxal phosphate)lysine. R135 provides a ligand contact to substrate. Residue Y274 is the Proton acceptor; specific for L-alanine of the active site. M322 lines the substrate pocket.

It belongs to the alanine racemase family. It depends on pyridoxal 5'-phosphate as a cofactor.

It carries out the reaction L-alanine = D-alanine. The protein operates within amino-acid biosynthesis; D-alanine biosynthesis; D-alanine from L-alanine: step 1/1. Functionally, catalyzes the interconversion of L-alanine and D-alanine. May also act on other amino acids. This is Alanine racemase (alr) from Desulfosudis oleivorans (strain DSM 6200 / JCM 39069 / Hxd3) (Desulfococcus oleovorans).